The sequence spans 875 residues: Alanine--tRNA ligase (875 aa).

4 residues coordinate Zn(2+): His-563, His-567, Cys-665, and His-669.

It belongs to the class-II aminoacyl-tRNA synthetase family. It depends on Zn(2+) as a cofactor.

The protein localises to the cytoplasm. The enzyme catalyses tRNA(Ala) + L-alanine + ATP = L-alanyl-tRNA(Ala) + AMP + diphosphate. Functionally, catalyzes the attachment of alanine to tRNA(Ala) in a two-step reaction: alanine is first activated by ATP to form Ala-AMP and then transferred to the acceptor end of tRNA(Ala). Also edits incorrectly charged Ser-tRNA(Ala) and Gly-tRNA(Ala) via its editing domain. The chain is Alanine--tRNA ligase from Desulfitobacterium hafniense (strain Y51).